The sequence spans 177 residues: ATP synthase subunit delta (177 aa).

Belongs to the ATPase delta chain family. As to quaternary structure, F-type ATPases have 2 components, F(1) - the catalytic core - and F(0) - the membrane proton channel. F(1) has five subunits: alpha(3), beta(3), gamma(1), delta(1), epsilon(1). F(0) has three main subunits: a(1), b(2) and c(10-14). The alpha and beta chains form an alternating ring which encloses part of the gamma chain. F(1) is attached to F(0) by a central stalk formed by the gamma and epsilon chains, while a peripheral stalk is formed by the delta and b chains.

It is found in the cell inner membrane. F(1)F(0) ATP synthase produces ATP from ADP in the presence of a proton or sodium gradient. F-type ATPases consist of two structural domains, F(1) containing the extramembraneous catalytic core and F(0) containing the membrane proton channel, linked together by a central stalk and a peripheral stalk. During catalysis, ATP synthesis in the catalytic domain of F(1) is coupled via a rotary mechanism of the central stalk subunits to proton translocation. Functionally, this protein is part of the stalk that links CF(0) to CF(1). It either transmits conformational changes from CF(0) to CF(1) or is implicated in proton conduction. The protein is ATP synthase subunit delta of Escherichia coli O81 (strain ED1a).